Here is a 494-residue protein sequence, read N- to C-terminus: UPF0371 protein SPy_1343/M5005_Spy1095 (494 aa).

Belongs to the UPF0371 family.

In Streptococcus pyogenes serotype M1, this protein is UPF0371 protein SPy_1343/M5005_Spy1095.